Reading from the N-terminus, the 500-residue chain is 4-aminobutyrate aminotransferase, mitochondrial (500 aa).

A mitochondrion-targeting transit peptide spans 1-28 (MASVLLTRRLACSFRHNHRLLVPGWRHI). Cys-163 contributes to the [2Fe-2S] cluster binding site. 164–165 (GS) serves as a coordination point for pyridoxal 5'-phosphate. Residue Cys-166 participates in [2Fe-2S] cluster binding. Arg-220 provides a ligand contact to substrate. N6-succinyllysine is present on Lys-231. An N6-acetyllysine; alternate modification is found at Lys-252. Lys-252 bears the N6-succinyllysine; alternate mark. An N6-acetyllysine mark is found at Lys-279 and Lys-318. Lys-357 is subject to N6-(pyridoxal phosphate)lysine. Thr-381 provides a ligand contact to pyridoxal 5'-phosphate. Lys-413 is modified (N6-acetyllysine; alternate). N6-succinyllysine; alternate is present on Lys-413. Residues Lys-452 and Lys-470 each carry the N6-acetyllysine modification.

This sequence belongs to the class-III pyridoxal-phosphate-dependent aminotransferase family. Homodimer; disulfide-linked. Pyridoxal 5'-phosphate is required as a cofactor. It depends on [2Fe-2S] cluster as a cofactor.

It localises to the mitochondrion matrix. The enzyme catalyses 4-aminobutanoate + 2-oxoglutarate = succinate semialdehyde + L-glutamate. It carries out the reaction (S)-3-amino-2-methylpropanoate + 2-oxoglutarate = 2-methyl-3-oxopropanoate + L-glutamate. Catalyzes the conversion of gamma-aminobutyrate and L-beta-aminoisobutyrate to succinate semialdehyde and methylmalonate semialdehyde, respectively. Can also convert delta-aminovalerate and beta-alanine. This is 4-aminobutyrate aminotransferase, mitochondrial (ABAT) from Sus scrofa (Pig).